A 79-amino-acid polypeptide reads, in one-letter code: UPF0154 protein llmg_1186 (79 aa).

Residues 4-24 (ILAILLMVVCLLAGFFLGTWF) traverse the membrane as a helical segment.

The protein belongs to the UPF0154 family.

The protein resides in the cell membrane. The sequence is that of UPF0154 protein llmg_1186 from Lactococcus lactis subsp. cremoris (strain MG1363).